The sequence spans 392 residues: Phosphoglycerate kinase (392 aa).

Substrate-binding positions include 21 to 23, R36, 59 to 62, R113, and R146; these read DFN and HLGR. ATP is bound by residues K197, E319, and 345 to 348; that span reads GGDT.

Belongs to the phosphoglycerate kinase family. In terms of assembly, monomer.

The protein localises to the cytoplasm. It catalyses the reaction (2R)-3-phosphoglycerate + ATP = (2R)-3-phospho-glyceroyl phosphate + ADP. Its pathway is carbohydrate degradation; glycolysis; pyruvate from D-glyceraldehyde 3-phosphate: step 2/5. The chain is Phosphoglycerate kinase from Francisella tularensis subsp. tularensis (strain FSC 198).